We begin with the raw amino-acid sequence, 323 residues long: Cytochrome c biogenesis protein CcsA (323 aa).

The next 8 membrane-spanning stretches (helical) occupy residues 9 to 29, 45 to 62, 71 to 91, 98 to 118, 143 to 163, 227 to 247, 261 to 275, and 285 to 305; these read ILTHISFSIISIVITIHLLNL, MMATFFCITGLLVTRWIY, LYESLMFLSWSFSIIHMVPYF, LSAITAPSAIFTQGFATSGLL, MLLGYASLLCGSLLSVALLVI, IISLGFTFSTIGILSGAVWAN, TWAFITWTIFAIYLH, and VGPAIVASMGFLIIWICYFGV.

The protein belongs to the CcmF/CycK/Ccl1/NrfE/CcsA family. As to quaternary structure, may interact with Ccs1.

It localises to the plastid. The protein resides in the chloroplast thylakoid membrane. Required during biogenesis of c-type cytochromes (cytochrome c6 and cytochrome f) at the step of heme attachment. The chain is Cytochrome c biogenesis protein CcsA from Calycanthus floridus var. glaucus (Eastern sweetshrub).